We begin with the raw amino-acid sequence, 476 residues long: 3-isopropylmalate dehydratase large subunit (476 aa).

[4Fe-4S] cluster contacts are provided by C357, C417, and C420.

Belongs to the aconitase/IPM isomerase family. LeuC type 1 subfamily. Heterodimer of LeuC and LeuD. Requires [4Fe-4S] cluster as cofactor.

It catalyses the reaction (2R,3S)-3-isopropylmalate = (2S)-2-isopropylmalate. The protein operates within amino-acid biosynthesis; L-leucine biosynthesis; L-leucine from 3-methyl-2-oxobutanoate: step 2/4. In terms of biological role, catalyzes the isomerization between 2-isopropylmalate and 3-isopropylmalate, via the formation of 2-isopropylmaleate. This Mycobacterium avium (strain 104) protein is 3-isopropylmalate dehydratase large subunit.